The following is an 896-amino-acid chain: MLRAALSLLALPLAGAAEEPTQKPESPGEPPPGLELFRWQWHEVEAPYLVALWILVASLAKIVFHLSRKVTSLVPESCLLILLGLVLGGIVLAVAKKAEYQLEPGTFFLFLLPPIVLDSGYFMPSRLFFDNLGAILTYAVVGTLWNAFTTGAALWGLQQAGLVAPRVQAGLLDFLLFGSLISAVDPVAVLAVFEEVHVNETLFIIVFGESLLNDAVTVVLYKVCNSFVEMGSANVQATDYLKGVASLFVVSLGGAAVGLVFAFLLALTTRFTKRVRIIEPLLVFLLAYAAYLTAEMASLSAILAVTMCGLGCKKYVEANISHKSRTTVKYTMKTLASCAETVIFMLLGISAVDSSKWAWDSGLVLGTLIFILFFRALGVVLQTWVLNQFRLVPLDKIDQVVMSYGGLRGAVAFALVILLDRTKVPAKDYFVATTIVVVFFTVIVQGLTIKPLVKWLKVKRSEHHKPTLNQELHEHTFDHILAAVEDVVGHHGYHYWRDRWEQFDKKYLSQLLMRRSAYRIRDQIWDVYYRLNIRDAISFVDQGGHVLSSTGLTLPSMPSRNSVAETSVTNLLRESGSGACLDLQVIDTVRSGRDREDAVMHHLLCGGLYKPRRRYKASCSRHFISEDAQERQDKEVFQQNMKRRLESFKSTKHNICFTKSKPRPRKTGRRKKDGVANAEATNGKHRGLGFQDTAAVILTVESEEEEEESDSSETEKEDDEGIIFVARATSEVLQEGKVSGSLEVCPSPRIIPPSPTCAEKELPWKSGQGDLAVYVSSETTKIVPVDMQTGWNQSISSLESLASPPCNQAPILTCLPPHPRGTEEPQVPLHLPSDPRSSFAFPPSLAKAGRSRSESSADLPQQQELQPLMGHKDHTHLSPGTATSHWCIQFNRGSRL.

Topologically, residues 1–45 are cytoplasmic; sequence MLRAALSLLALPLAGAAEEPTQKPESPGEPPPGLELFRWQWHEVE. The chain crosses the membrane as a helical span at residues 46–66; the sequence is APYLVALWILVASLAKIVFHL. The Extracellular segment spans residues 67 to 73; it reads SRKVTSL. The chain crosses the membrane as a helical span at residues 74–94; sequence VPESCLLILLGLVLGGIVLAV. The Cytoplasmic segment spans residues 95-103; sequence AKKAEYQLE. The helical transmembrane segment at 104 to 124 threads the bilayer; the sequence is PGTFFLFLLPPIVLDSGYFMP. Residues 125–134 are Extracellular-facing; that stretch reads SRLFFDNLGA. Residues 135-155 traverse the membrane as a helical segment; sequence ILTYAVVGTLWNAFTTGAALW. The Cytoplasmic segment spans residues 156 to 173; it reads GLQQAGLVAPRVQAGLLD. Residues 174–194 traverse the membrane as a helical segment; sequence FLLFGSLISAVDPVAVLAVFE. Topologically, residues 195-200 are extracellular; it reads EVHVNE. N-linked (GlcNAc...) asparagine glycosylation occurs at asparagine 199. A helical transmembrane segment spans residues 201–221; the sequence is TLFIIVFGESLLNDAVTVVLY. Residues 222 to 246 are Cytoplasmic-facing; that stretch reads KVCNSFVEMGSANVQATDYLKGVAS. Residues 247–267 form a helical membrane-spanning segment; the sequence is LFVVSLGGAAVGLVFAFLLAL. The Extracellular segment spans residues 268–276; that stretch reads TTRFTKRVR. The helical transmembrane segment at 277–297 threads the bilayer; it reads IIEPLLVFLLAYAAYLTAEMA. The Cytoplasmic segment spans residues 298–331; it reads SLSAILAVTMCGLGCKKYVEANISHKSRTTVKYT. Residues 332–352 form a helical membrane-spanning segment; that stretch reads MKTLASCAETVIFMLLGISAV. The Extracellular portion of the chain corresponds to 353–360; sequence DSSKWAWD. The chain crosses the membrane as a helical span at residues 361–381; the sequence is SGLVLGTLIFILFFRALGVVL. Over 382 to 398 the chain is Cytoplasmic; it reads QTWVLNQFRLVPLDKID. The helical transmembrane segment at 399–419 threads the bilayer; it reads QVVMSYGGLRGAVAFALVILL. The Extracellular portion of the chain corresponds to 420–428; it reads DRTKVPAKD. The chain crosses the membrane as a helical span at residues 429–449; sequence YFVATTIVVVFFTVIVQGLTI. The Cytoplasmic segment spans residues 450–896; the sequence is KPLVKWLKVK…CIQFNRGSRL (447 aa). The interval 576–721 is required for interaction with ARRB2; that stretch reads GSGACLDLQV…SETEKEDDEG (146 aa). Disordered regions lie at residues 658-686, 701-720, and 818-864; these read TKSK…GKHR, ESEE…EDDE, and HPRG…QQQE. The segment covering 660 to 672 has biased composition (basic residues); sequence SKPRPRKTGRRKK. Residues 854–864 are compositionally biased toward polar residues; sequence ESSADLPQQQE.

The protein belongs to the monovalent cation:proton antiporter 1 (CPA1) transporter (TC 2.A.36) family. In terms of assembly, interacts with CHP1 and CHP2. Interacts with ARRB2; facilitates the endocytosis of SLC9A5 from the plasma membrane. Interacts with RACK1; this interaction positively regulates SLC9A5 activity and promotes SLC9A5 localization to focal adhesions. Interacts with SCAMP2; this interaction regulates SLC9A5 cell-surface targeting and SLC9A5 activity. In terms of processing, phosphorylated by PRKAA2; promotes its accumulation at the cell surface. Phosphorylated by CSNK2A1 in a manner favoring its beta-arrestin binding and endocytosis. As to expression, mainly expressed in brain. Expressed in neurons of the central and peripheral nervous system. Expressed also in testis, spleen, and skeletal muscle.

Its subcellular location is the cell membrane. The protein localises to the recycling endosome membrane. It is found in the cell projection. It localises to the dendritic spine membrane. The protein resides in the synaptic cell membrane. Its subcellular location is the cell junction. The protein localises to the focal adhesion. The catalysed reaction is Na(+)(in) + H(+)(out) = Na(+)(out) + H(+)(in). Its activity is regulated as follows. ATP-depletion almost completely abolishes SLC9A5 activity. Inhibited by amiloride compounds. Its function is as follows. Plasma membrane Na(+)/H(+) antiporter. Mediates the electroneutral exchange of intracellular H(+) ions for extracellular Na(+) in 1:1 stoichiometry, thus regulating intracellular pH homeostasis, in particular in neural tissues. Acts as a negative regulator of dendritic spine growth. Plays a role in postsynaptic remodeling and signaling. Can also contribute to organellar pH regulation, with consequences for receptor tyrosine kinase trafficking. This is Sodium/hydrogen exchanger 5 from Homo sapiens (Human).